The primary structure comprises 942 residues: NBPF family member NBPF8 (942 aa).

Positions Ala89 to Leu130 form a coiled coil. Residues Lys161–Ser203 form a disordered region. Acidic residues predominate over residues Glu165–Glu180. Positions Glu165–Ser259 constitute an Olduvai 1 domain. Positions Glu190 to Glu201 are enriched in basic and acidic residues. Residues Lys339–Leu401 adopt a coiled-coil conformation. 6 consecutive Olduvai domains span residues Glu436 to Pro528, Glu529 to Pro617, Ser620 to Asp675, Glu676 to Pro767, Ser770 to Lys843, and Lys844 to Phe904. Disordered regions lie at residues Glu451 to Ser474 and Pro528 to Ser566. Composition is skewed to acidic residues over residues Asn530–Glu539 and Glu550–Asp562. Basic residues predominate over residues Gly831–Arg849. Residues Gly831–Leu863 form a disordered region.

It belongs to the NBPF family. In terms of tissue distribution, expressed in the mammary gland.

The protein localises to the cytoplasm. This Homo sapiens (Human) protein is NBPF family member NBPF8.